A 335-amino-acid polypeptide reads, in one-letter code: Proline racemase (335 aa).

The active-site Proton acceptor is C91. C255 serves as the catalytic Proton donor.

It belongs to the proline racemase family. In terms of assembly, homodimer.

It catalyses the reaction L-proline = D-proline. Functionally, catalyzes the reversible interconversion of L- and D-proline. Plays an important role in the regulation of intra- and extracellular amino acid pools, allowing the bacterium to profit from host precursors and enzymatic pathways. Strong B-cell mitogen. The protein is Proline racemase of Clostridioides difficile (strain 630) (Peptoclostridium difficile).